Consider the following 189-residue polypeptide: Adenylate kinase homolog MTH_1663 (189 aa).

ATP is bound at residue 12–20 (GVPGTGKTT).

Belongs to the archaeal adenylate kinase family.

In Methanothermobacter thermautotrophicus (strain ATCC 29096 / DSM 1053 / JCM 10044 / NBRC 100330 / Delta H) (Methanobacterium thermoautotrophicum), this protein is Adenylate kinase homolog MTH_1663.